The primary structure comprises 319 residues: tRNA-cytidine(32) 2-sulfurtransferase (319 aa).

The PP-loop motif motif lies at 43-48 (SGGKDS). C118, C121, and C209 together coordinate [4Fe-4S] cluster.

It belongs to the TtcA family. Homodimer. Mg(2+) is required as a cofactor. Requires [4Fe-4S] cluster as cofactor.

The protein resides in the cytoplasm. It carries out the reaction cytidine(32) in tRNA + S-sulfanyl-L-cysteinyl-[cysteine desulfurase] + AH2 + ATP = 2-thiocytidine(32) in tRNA + L-cysteinyl-[cysteine desulfurase] + A + AMP + diphosphate + H(+). It participates in tRNA modification. Functionally, catalyzes the ATP-dependent 2-thiolation of cytidine in position 32 of tRNA, to form 2-thiocytidine (s(2)C32). The sulfur atoms are provided by the cysteine/cysteine desulfurase (IscS) system. The protein is tRNA-cytidine(32) 2-sulfurtransferase of Neisseria gonorrhoeae (strain NCCP11945).